The primary structure comprises 681 residues: Dipeptidyl carboxypeptidase (681 aa).

Residue His470 participates in Zn(2+) binding. Glu471 is an active-site residue. 2 residues coordinate Zn(2+): His474 and His477.

The protein belongs to the peptidase M3 family. The cofactor is Zn(2+).

The protein localises to the cytoplasm. The catalysed reaction is Hydrolysis of unblocked, C-terminal dipeptides from oligopeptides, with broad specificity. Does not hydrolyze bonds in which P1' is Pro, or both P1 and P1' are Gly.. With respect to regulation, stimulated by Mn(2+), Mg(2+), Co(2+) and Ca(2+), inhibited by Cu(2+), Ni(2+), Zn(2+), chymostatin and 1,10-phenanthroline. Removes dipeptides from the C-termini of N-blocked tripeptides, tetrapeptides and larger peptides. The protein is Dipeptidyl carboxypeptidase of Escherichia coli (strain K12).